We begin with the raw amino-acid sequence, 98 residues long: Cytochrome c-552 (98 aa).

An N-terminal signal peptide occupies residues 1-18 (MKKFLLVAVVGLAGITFA). Positions 28, 31, 32, and 77 each coordinate heme c.

The protein belongs to the cytochrome c family. In terms of processing, binds 1 heme c group covalently per subunit.

Functionally, reacts with hydrogenase. In Hydrogenobacter thermophilus (strain DSM 6534 / IAM 12695 / TK-6), this protein is Cytochrome c-552.